Here is a 164-residue protein sequence, read N- to C-terminus: Phosphopantetheine adenylyltransferase (164 aa).

Residue Ser9 participates in substrate binding. Residues 9–10 (SF) and His17 contribute to the ATP site. Substrate is bound by residues Lys41, Leu73, and Lys87. ATP contacts are provided by residues 88-90 (GLR), Glu98, and 123-129 (YSYLSSS).

Belongs to the bacterial CoaD family. In terms of assembly, homohexamer. Mg(2+) serves as cofactor.

The protein resides in the cytoplasm. It carries out the reaction (R)-4'-phosphopantetheine + ATP + H(+) = 3'-dephospho-CoA + diphosphate. It functions in the pathway cofactor biosynthesis; coenzyme A biosynthesis; CoA from (R)-pantothenate: step 4/5. In terms of biological role, reversibly transfers an adenylyl group from ATP to 4'-phosphopantetheine, yielding dephospho-CoA (dPCoA) and pyrophosphate. The chain is Phosphopantetheine adenylyltransferase from Clostridium botulinum (strain Okra / Type B1).